A 70-amino-acid polypeptide reads, in one-letter code: Mu-conotoxin PnIVB (70 aa).

The signal sequence occupies residues 1-20 (MMSKLGVLLIICLLLCPLTA). A propeptide spanning residues 21–51 (VPQDGDQPADQPAERMQDDISSEHHPFFDPV) is cleaved from the precursor.

Contains 3 disulfide bonds. They are not added, since framework IV presents two different connectivities (I-V, II-III, IV-VI and I-III, II-V, IV-VI). In terms of tissue distribution, expressed by the venom duct.

The protein localises to the secreted. Functionally, mu-conotoxins block voltage-gated sodium channels (Nav). Blocks reversibly sodium channels in molluskan neurons, but has no effect on sodium currents in bovine chromaffin cells or in rat brain synaptosomes. Induces paralysis in bivalve mollusks (Mytilus). No effect are observed on fish (Gambusia) and fly larvae (Sarcophaga). Is approximately 6 times more potent than PnIVA in blockade of the sodium current in Lymnaea neurons. In Conus pennaceus (Feathered cone), this protein is Mu-conotoxin PnIVB.